A 379-amino-acid polypeptide reads, in one-letter code: MSKRDYYEVLGVQKGASADDLKKAYRKLAMQYHPDRNQGDKAAEQKFKEISEAYDVLKDDQKRAAYDRFGHAAFENGRGGPGAGAAGFDFNFGSGFADIFDEMFGEFMGRGRAGQTSNRGADLRYNLEITLEDAFKGATTTVRVPTSVACESCNGTGAEGGSTPIACPTCNGHGKVRAQQGFFTIERTCPACHGVGRVIKDPCRTCGGQGRVRKEKTLSVNIPAGVEDGTRIRLAGEGEAGLRGGPPGDLYIFLAIAPHRFFQRDGANLQCRVPIPMTTAALGGSVEVPTIDGSRAKIAIPAGTQTGHQFRLKGKGMSVLRSPARGDLYIQVVVETPVNLTKKQQELLREFEKAGQDGLHPESEGFFAKVKELWADLKD.

Residues 5 to 70 (DYYEVLGVQK…QKRAAYDRFG (66 aa)) form the J domain. Residues 137 to 215 (GATTTVRVPT…CGGQGRVRKE (79 aa)) form a CR-type zinc finger. Cysteine 150, cysteine 153, cysteine 167, cysteine 170, cysteine 189, cysteine 192, cysteine 203, and cysteine 206 together coordinate Zn(2+). 4 CXXCXGXG motif repeats span residues 150 to 157 (CESCNGTG), 167 to 174 (CPTCNGHG), 189 to 196 (CPACHGVG), and 203 to 210 (CRTCGGQG).

Belongs to the DnaJ family. As to quaternary structure, homodimer. Zn(2+) is required as a cofactor.

It localises to the cytoplasm. Functionally, participates actively in the response to hyperosmotic and heat shock by preventing the aggregation of stress-denatured proteins and by disaggregating proteins, also in an autonomous, DnaK-independent fashion. Unfolded proteins bind initially to DnaJ; upon interaction with the DnaJ-bound protein, DnaK hydrolyzes its bound ATP, resulting in the formation of a stable complex. GrpE releases ADP from DnaK; ATP binding to DnaK triggers the release of the substrate protein, thus completing the reaction cycle. Several rounds of ATP-dependent interactions between DnaJ, DnaK and GrpE are required for fully efficient folding. Also involved, together with DnaK and GrpE, in the DNA replication of plasmids through activation of initiation proteins. This chain is Chaperone protein DnaJ, found in Rhodospirillum centenum (strain ATCC 51521 / SW).